We begin with the raw amino-acid sequence, 261 residues long: Protein LIKE COV 2 (261 aa).

Residues 1 to 38 (MAEGKEATTSSLSQGLTPHQDPDDAPKSPPNSPNSSTR) are disordered. Topologically, residues 1–56 (MAEGKEATTSSLSQGLTPHQDPDDAPKSPPNSPNSSTRKACYGVLQSWVSKKFMTG) are cytoplasmic. A compositionally biased stretch (polar residues) spans 7 to 17 (ATTSSLSQGLT). The helical transmembrane segment at 57 to 77 (FVVLFPVAVTFLITWWFIQFV) threads the bilayer. At 78–91 (DGFFSPIYENLGVD) the chain is on the extracellular side. The chain crosses the membrane as a helical span at residues 92 to 112 (IFGLGFITSVLFTFFVGIFAS). The Cytoplasmic portion of the chain corresponds to 113 to 261 (SWLGSTVFWL…HSLRVPLNRL (149 aa)).

It belongs to the plant COV1 protein family.

Its subcellular location is the membrane. The sequence is that of Protein LIKE COV 2 from Arabidopsis thaliana (Mouse-ear cress).